Consider the following 131-residue polypeptide: UPF0146 protein PYRAB01940 (131 aa).

Belongs to the UPF0146 family.

This Pyrococcus abyssi (strain GE5 / Orsay) protein is UPF0146 protein PYRAB01940.